The following is a 408-amino-acid chain: Glutamate N-acetyltransferase (408 aa).

Substrate contacts are provided by threonine 150, lysine 176, threonine 189, glutamate 271, asparagine 403, and threonine 408. Threonine 189 serves as the catalytic Nucleophile.

Belongs to the ArgJ family. In terms of assembly, heterotetramer of two alpha and two beta chains.

The protein resides in the cytoplasm. It catalyses the reaction N(2)-acetyl-L-ornithine + L-glutamate = N-acetyl-L-glutamate + L-ornithine. Its pathway is amino-acid biosynthesis; L-arginine biosynthesis; L-ornithine and N-acetyl-L-glutamate from L-glutamate and N(2)-acetyl-L-ornithine (cyclic): step 1/1. In terms of biological role, catalyzes the transfer of the acetyl group from N(2)-acetylornithine to glutamate, forming N-acetylglutamate and L-ornithine. In Methanococcus maripaludis (strain C7 / ATCC BAA-1331), this protein is Glutamate N-acetyltransferase.